Consider the following 300-residue polypeptide: MKRNKIVFIFGPTAVGKSELLLNFPKGVAEIINVDSVQVYKEFDIASCKPSIELRAHVKHHLVDFLEPIEEYNLGIFYKEACEIIENLRVQKKLPVFVGGSAFYFKHLKYGLPSTPPVSSEIRLHINSLFTTRGKNYLLEELKRVDFERYESISKNDIYRIKRSLEVYYQTGIPISQFLKRGQMLANVLAIGLRRPMEEMRSRIISRVKNMIDCGLLEEIKSLLGKGYNETTPAFKGIGYREFLLWKSRPYSMLNDIINLIVKNSFLYVKRQMTFFDKIPNVLWFHPDDDLKDILDLIFV.

ATP is bound at residue 11 to 18 (GPTAVGKS). 13-18 (TAVGKS) provides a ligand contact to substrate. The tract at residues 35-38 (DSVQ) is interaction with substrate tRNA.

This sequence belongs to the IPP transferase family. In terms of assembly, monomer. Mg(2+) is required as a cofactor.

It catalyses the reaction adenosine(37) in tRNA + dimethylallyl diphosphate = N(6)-dimethylallyladenosine(37) in tRNA + diphosphate. Functionally, catalyzes the transfer of a dimethylallyl group onto the adenine at position 37 in tRNAs that read codons beginning with uridine, leading to the formation of N6-(dimethylallyl)adenosine (i(6)A). This chain is tRNA dimethylallyltransferase, found in Borrelia hermsii (strain HS1 / DAH).